The chain runs to 1809 residues: Pyochelin synthetase PchF (1809 aa).

Positions 69–490 (FPLTPVQAAY…GLLRRLAQSP (422 aa)) are condensation/cyclization. Residues 520 to 915 (FAERALLTPD…GREDDQVKIR (396 aa)) are adenylation. A Carrier domain is found at 1407–1488 (APADELENAL…GLAERLRSAP (82 aa)). Ser1442 is subject to O-(pantetheine 4'-phosphoryl)serine. Residues 1584–1797 (LGRRYAEALH…FDCLGEALAQ (214 aa)) are thioesterase.

The protein belongs to the NRP synthetase family. Requires pantetheine 4'-phosphate as cofactor.

The catalysed reaction is holo-[peptidyl-carrier protein] + L-cysteine + ATP = L-cysteinyl-[peptidyl-carrier protein] + AMP + diphosphate. It participates in siderophore biosynthesis. Involved in the biosynthesis of the siderophore pyochelin. Adenylates L-cysteine and loads it onto its peptidyl carrier domain via a thioester linkage to the phosphopanthetheine moiety. Then forms a peptide bond between the salicyl-thiazolinyl intermediate bound to the second carrier domain of PchE and the cysteine bound to its own peptidyl carrier domain to form the salicyl-thiazolinyl-cysteinyl-S-PCP2 intermediate. It subsequently cyclizes the C-terminal cysteine to form the second thiazoline heterocycle in the salicyl-thiazolinyl-thiazolinyl-S-PCP2 intermediate. When this intermediate is released by the action of a thioesterase, it produces the tricyclic acid hydroxyphenyl-thiazolyl-thiazolinyl-carboxylic acid (HPTT-COOH), an advanced intermediate containing the aryl-4,2-bis-heterocyclic skeleton of the bithiazoline class of siderophores. The sequence is that of Pyochelin synthetase PchF from Pseudomonas aeruginosa (strain ATCC 15692 / DSM 22644 / CIP 104116 / JCM 14847 / LMG 12228 / 1C / PRS 101 / PAO1).